The primary structure comprises 476 residues: ENTH domain-containing protein C794.11c (476 aa).

Positions 30–154 (YTSMEARVRE…VELLNDSERI (125 aa)) constitute an ENTH domain. Disordered stretches follow at residues 157-198 (ERKR…GSYR), 213-308 (NGYH…GFGD), 410-429 (QAGL…SGSN), and 444-472 (VHQE…LDND). At serine 173 the chain carries Phosphoserine. Low complexity-rich tracts occupy residues 178–198 (RIST…GSYR) and 213–222 (NGYHDSSSMS). Serine 228 is modified (phosphoserine). The segment covering 229-240 (DNDVEEYNEDGD) has biased composition (acidic residues). Tyrosine 235 bears the Phosphotyrosine mark. 2 positions are modified to phosphoserine: serine 243 and serine 244. Positions 262–271 (QSDKAPEQPK) are enriched in basic and acidic residues. Positions 444–454 (VHQENSTRERV) are enriched in basic and acidic residues. Serine 459 bears the Phosphoserine mark.

The protein is ENTH domain-containing protein C794.11c of Schizosaccharomyces pombe (strain 972 / ATCC 24843) (Fission yeast).